A 379-amino-acid polypeptide reads, in one-letter code: Lipid-A-disaccharide synthase (379 aa).

This sequence belongs to the LpxB family.

The catalysed reaction is a lipid X + a UDP-2-N,3-O-bis[(3R)-3-hydroxyacyl]-alpha-D-glucosamine = a lipid A disaccharide + UDP + H(+). It functions in the pathway bacterial outer membrane biogenesis; LPS lipid A biosynthesis. Functionally, condensation of UDP-2,3-diacylglucosamine and 2,3-diacylglucosamine-1-phosphate to form lipid A disaccharide, a precursor of lipid A, a phosphorylated glycolipid that anchors the lipopolysaccharide to the outer membrane of the cell. In Vibrio cholerae serotype O1 (strain ATCC 39541 / Classical Ogawa 395 / O395), this protein is Lipid-A-disaccharide synthase.